A 350-amino-acid polypeptide reads, in one-letter code: C5a anaphylatoxin chemotactic receptor 1 (350 aa).

Topologically, residues 1–37 (MDSFNYTTPDYGHYDDKDTLDPNTPVDKTSNTLRVPD) are extracellular. Positions 10–18 (DYGHYDDKD) are required for CHIPS binding. Tyr11 and Tyr14 each carry sulfotyrosine. An involved in C5a binding region spans residues 21-30 (DPNTPVDKTS). Residues 38–64 (ILALVIFAVVFLVGVLGNALVVWVTAF) form a helical membrane-spanning segment. Residues 65-69 (EVKRT) lie on the Cytoplasmic side of the membrane. Residues 70–93 (INAIWFLNLAVADFLSCLALPILF) traverse the membrane as a helical segment. Residues 94–110 (TSIVQHHHWPFGGAACR) lie on the Extracellular side of the membrane. Cys109 and Cys188 are disulfide-bonded. The chain crosses the membrane as a helical span at residues 111–132 (ILPSLILLNMYASILLLATISA). Residues 133 to 153 (DRFLLVFKPIWCQNFRGAGLA) are Cytoplasmic-facing. A helical transmembrane segment spans residues 154–174 (WIACAVAWGLALLLTIPSFLY). At 175 to 200 (RVVREEYFPPKVLCGVDYSHDKQRER) the chain is on the extracellular side. Residues 201 to 226 (AVAVVRLVLGFLWPLLTLTICYTFIL) form a helical membrane-spanning segment. The Cytoplasmic segment spans residues 227 to 242 (LRTWSRRATRSTKTLK). A helical membrane pass occupies residues 243-265 (VVVAVVASFFIFWLPYQVTGIMM). Residues 266–282 (SFLEPSSPTFLLLKKLD) are Extracellular-facing. Residues 283-303 (SLCVSFAYINCCINPIIYVVA) form a helical membrane-spanning segment. The Cytoplasmic segment spans residues 304–350 (GQGFQGRLRKSLPSLLRNVLTEESVVRESKSFTRSTVDTMAEKTQAV). Phosphoserine occurs at positions 314, 317, 327, 332, 334, and 338.

Belongs to the G-protein coupled receptor 1 family. Homodimer. May also form higher-order oligomers. Interacts (when phosphorylated) with ARRB1 and ARRB2; the interaction is associated with internalization of C5aR. Interacts (via N-terminal domain) with S.aureus chemotaxis inhibitory protein (CHIPS); the interaction blocks the receptor and may thus inhibit the immune response. Sulfation plays a critical role in the association of C5aR with C5a, but no significant role in the ability of the receptor to transduce a signal and mobilize calcium in response to a small peptide agonist. Sulfation at Tyr-14 is important for CHIPS binding. In terms of processing, phosphorylated on serine residues in response to C5a binding, resulting in internalization of the receptor and short-term desensitization to C5a.

It is found in the cell membrane. The protein resides in the cytoplasmic vesicle. In terms of biological role, receptor for the chemotactic and inflammatory peptide anaphylatoxin C5a. The ligand interacts with at least two sites on the receptor: a high-affinity site on the extracellular N-terminus, and a second site in the transmembrane region which activates downstream signaling events. Receptor activation stimulates chemotaxis, granule enzyme release, intracellular calcium release and superoxide anion production. The sequence is that of C5a anaphylatoxin chemotactic receptor 1 (C5AR1) from Gorilla gorilla gorilla (Western lowland gorilla).